A 353-amino-acid polypeptide reads, in one-letter code: AA9 family lytic polysaccharide monooxygenase A (353 aa).

An N-terminal signal peptide occupies residues 1–19 (MKSTFGLLALAAAAKMAHA). Cu(2+)-binding residues include H20 and H102. Cysteines 62 and 183 form a disulfide. Position 169 (H169) interacts with O2. Y180 lines the Cu(2+) pocket. The segment covering 266–276 (KPTTTTAAAPA) has biased composition (low complexity). The disordered stretch occupies residues 266–316 (KPTTTTAAAPAETDSCDGDDDDYETETPAPQASATQAPAPQRPAPQTPSGS). Residues 279–290 (DSCDGDDDDYET) show a composition bias toward acidic residues. Residues 291-304 (ETPAPQASATQAPA) show a composition bias toward low complexity. Positions 315-351 (GSVKEWYQCGGINYTGAKNCESGLVCKEWNPYYHQCI) constitute a CBM1 domain. A glycan (N-linked (GlcNAc...) asparagine) is linked at N327.

Belongs to the polysaccharide monooxygenase AA9 family. It depends on Cu(2+) as a cofactor.

It is found in the secreted. It carries out the reaction [(1-&gt;4)-beta-D-glucosyl]n+m + reduced acceptor + O2 = 4-dehydro-beta-D-glucosyl-[(1-&gt;4)-beta-D-glucosyl]n-1 + [(1-&gt;4)-beta-D-glucosyl]m + acceptor + H2O.. Its function is as follows. Lytic polysaccharide monooxygenase (LPMO) that depolymerizes crystalline and amorphous polysaccharides via the oxidation of scissile alpha- or beta-(1-4)-glycosidic bonds, yielding C4 oxidation products. Catalysis by LPMOs requires the reduction of the active-site copper from Cu(II) to Cu(I) by a reducing agent and H(2)O(2) or O(2) as a cosubstrate. The sequence is that of AA9 family lytic polysaccharide monooxygenase A (eglD) from Aspergillus clavatus (strain ATCC 1007 / CBS 513.65 / DSM 816 / NCTC 3887 / NRRL 1 / QM 1276 / 107).